Here is a 142-residue protein sequence, read N- to C-terminus: Large ribosomal subunit protein uL11 (142 aa).

It belongs to the universal ribosomal protein uL11 family. Part of the ribosomal stalk of the 50S ribosomal subunit. Interacts with L10 and the large rRNA to form the base of the stalk. L10 forms an elongated spine to which L12 dimers bind in a sequential fashion forming a multimeric L10(L12)X complex. Post-translationally, one or more lysine residues are methylated.

Its function is as follows. Forms part of the ribosomal stalk which helps the ribosome interact with GTP-bound translation factors. The polypeptide is Large ribosomal subunit protein uL11 (Citrobacter koseri (strain ATCC BAA-895 / CDC 4225-83 / SGSC4696)).